A 195-amino-acid polypeptide reads, in one-letter code: Glycerol-3-phosphate acyltransferase (195 aa).

A run of 5 helical transmembrane segments spans residues 7-27 (IFIL…SYVI), 52-72 (LALL…AIAQ), 80-100 (ILFL…YLFF), 113-133 (LIFI…ICFL), and 147-167 (LIAL…IFTI).

It belongs to the PlsY family. Probably interacts with PlsX.

It localises to the cell inner membrane. The catalysed reaction is an acyl phosphate + sn-glycerol 3-phosphate = a 1-acyl-sn-glycero-3-phosphate + phosphate. It functions in the pathway lipid metabolism; phospholipid metabolism. Functionally, catalyzes the transfer of an acyl group from acyl-phosphate (acyl-PO(4)) to glycerol-3-phosphate (G3P) to form lysophosphatidic acid (LPA). This enzyme utilizes acyl-phosphate as fatty acyl donor, but not acyl-CoA or acyl-ACP. The sequence is that of Glycerol-3-phosphate acyltransferase from Ehrlichia ruminantium (strain Welgevonden).